We begin with the raw amino-acid sequence, 115 residues long: Ig heavy chain V region PJ14 (115 aa).

Positions 1–19 (MAVLALLFCLVTFPSCILS) are cleaved as a signal peptide. Residues 20–115 (QVQLKESGPG…TDDTARYYCA (96 aa)) enclose the Ig-like domain.

The sequence is that of Ig heavy chain V region PJ14 from Mus musculus (Mouse).